The following is a 157-amino-acid chain: MPNIVLSRIDERLIHGQVGVQWVGFAGANLVLVANDEVAEDPVQQNLMEMVLAEGIAVRFWTLQKVIDNIHRAADRQKILLVCKTPADFLTLVKGGVPVNRINVGNMHYANGKQQIAKTVSVDAGDIAAFNDLKTAGVECFVQGVPTEPAVDLFKLL.

In terms of domain architecture, PTS EIIB type-4 spans 1 to 157 (MPNIVLSRID…EPAVDLFKLL (157 aa)). His15 acts as the Pros-phosphohistidine intermediate in catalysis.

The protein localises to the cytoplasm. Its function is as follows. The phosphoenolpyruvate-dependent sugar phosphotransferase system (sugar PTS), a major carbohydrate active -transport system, catalyzes the phosphorylation of incoming sugar substrates concomitantly with their translocation across the cell membrane. This system is involved in N-acetylgalactosamine transport. The sequence is that of N-acetylgalactosamine-specific phosphotransferase enzyme IIB component 2 (agaV) from Escherichia coli (strain K12).